The primary structure comprises 61 residues: Weak toxin CM-1c (61 aa).

Cystine bridges form between cysteine 3/cysteine 21, cysteine 14/cysteine 37, cysteine 41/cysteine 53, and cysteine 54/cysteine 59.

The protein belongs to the three-finger toxin family. Short-chain subfamily. Orphan group VI sub-subfamily. As to expression, expressed by the venom gland.

It localises to the secreted. This Hemachatus haemachatus (Rinkhals) protein is Weak toxin CM-1c.